Here is a 509-residue protein sequence, read N- to C-terminus: Carboxysome shell carbonic anhydrase (509 aa).

Cys-170 is a binding site for Zn(2+). Catalysis depends on Asp-172, which acts as the Proton acceptor. Residues His-238 and Cys-249 each contribute to the Zn(2+) site.

Belongs to the beta-class carbonic anhydrase family. CsoSCA subfamily. As to quaternary structure, homodimer. The cofactor is Zn(2+).

It localises to the carboxysome. It carries out the reaction hydrogencarbonate + H(+) = CO2 + H2O. In terms of biological role, reversible hydration of carbon dioxide. Essential for photosynthetic carbon dioxide fixation, supplies CO(2) to RuBisCO (ribulose bisphosphate carboxylase, cbbL-cbbS) in the carboxysome. There are estimated to be 29 CsoSCA oligomers per carboxysome. The polypeptide is Carboxysome shell carbonic anhydrase (Prochlorococcus marinus subsp. pastoris (strain CCMP1986 / NIES-2087 / MED4)).